Here is a 1253-residue protein sequence, read N- to C-terminus: Methionine synthase (1253 aa).

One can recognise a Hcy-binding domain in the interval Q6–V326. Zn(2+) is bound by residues C248, C311, and C312. One can recognise a Pterin-binding domain in the interval F359–E620. Residues G370–K372, D437, N458, D525, N567, R573, and R579 contribute to the (6S)-5,6,7,8-tetrahydrofolate site. In terms of domain architecture, B12-binding N-terminal spans Q650 to R747. Methylcob(III)alamin-binding positions include E697, G770–D774, H773, S818, T822, and A874. Residues Q760–E895 form the B12-binding domain. The region spanning S911–D1253 is the AdoMet activation domain. S-adenosyl-L-methionine contacts are provided by residues D962, R1160, and Y1215 to F1216. T1252 bears the Phosphothreonine mark.

It belongs to the vitamin-B12 dependent methionine synthase family. In terms of assembly, monomer. Dimer. Forms a multiprotein complex with MMACHC, MMADHC and MTRR. It depends on methylcob(III)alamin as a cofactor. Zn(2+) is required as a cofactor.

The protein localises to the cytoplasm. It catalyses the reaction (6S)-5-methyl-5,6,7,8-tetrahydrofolate + L-homocysteine = (6S)-5,6,7,8-tetrahydrofolate + L-methionine. Its pathway is amino-acid biosynthesis; L-methionine biosynthesis via de novo pathway; L-methionine from L-homocysteine (MetH route): step 1/1. Catalyzes the transfer of a methyl group from methylcob(III)alamin (MeCbl) to homocysteine, yielding enzyme-bound cob(I)alamin and methionine in the cytosol. MeCbl is an active form of cobalamin (vitamin B12) used as a cofactor for methionine biosynthesis. Cob(I)alamin form is regenerated to MeCbl by a transfer of a methyl group from 5-methyltetrahydrofolate. The processing of cobalamin in the cytosol occurs in a multiprotein complex composed of at least MMACHC, MMADHC, MTRR (methionine synthase reductase) and MTR which may contribute to shuttle safely and efficiently cobalamin towards MTR in order to produce methionine. The polypeptide is Methionine synthase (Mtr) (Rattus norvegicus (Rat)).